The chain runs to 330 residues: GTPase Obg (330 aa).

The 159-residue stretch at 1-159 (MQFIDQARIT…WPLQLELKLL (159 aa)) folds into the Obg domain. The 169-residue stretch at 160 to 328 (AEVGIIGLPN…LLERVWKELG (169 aa)) folds into the OBG-type G domain. ATP-binding positions include 166–173 (GLPNAGKS), 191–195 (FTTLV), 213–216 (DIPG), 280–283 (NKQE), and 309–311 (SAA). Positions 173 and 193 each coordinate Mg(2+).

The protein belongs to the TRAFAC class OBG-HflX-like GTPase superfamily. OBG GTPase family. Monomer. It depends on Mg(2+) as a cofactor.

Its subcellular location is the cytoplasm. In terms of biological role, an essential GTPase which binds GTP, GDP and possibly (p)ppGpp with moderate affinity, with high nucleotide exchange rates and a fairly low GTP hydrolysis rate. Plays a role in control of the cell cycle, stress response, ribosome biogenesis and in those bacteria that undergo differentiation, in morphogenesis control. This is GTPase Obg from Parasynechococcus marenigrum (strain WH8102).